The sequence spans 202 residues: Large ribosomal subunit protein bL25 (202 aa).

The protein belongs to the bacterial ribosomal protein bL25 family. CTC subfamily. In terms of assembly, part of the 50S ribosomal subunit; part of the 5S rRNA/L5/L18/L25 subcomplex. Contacts the 5S rRNA. Binds to the 5S rRNA independently of L5 and L18.

In terms of biological role, this is one of the proteins that binds to the 5S RNA in the ribosome where it forms part of the central protuberance. The sequence is that of Large ribosomal subunit protein bL25 from Corynebacterium efficiens (strain DSM 44549 / YS-314 / AJ 12310 / JCM 11189 / NBRC 100395).